A 186-amino-acid chain; its full sequence is Peptide deformylase (186 aa).

Cys-113 and His-157 together coordinate Fe cation. Glu-158 is a catalytic residue. His-161 is a binding site for Fe cation.

This sequence belongs to the polypeptide deformylase family. It depends on Fe(2+) as a cofactor.

The catalysed reaction is N-terminal N-formyl-L-methionyl-[peptide] + H2O = N-terminal L-methionyl-[peptide] + formate. In terms of biological role, removes the formyl group from the N-terminal Met of newly synthesized proteins. Requires at least a dipeptide for an efficient rate of reaction. N-terminal L-methionine is a prerequisite for activity but the enzyme has broad specificity at other positions. This Malacoplasma penetrans (strain HF-2) (Mycoplasma penetrans) protein is Peptide deformylase.